Consider the following 594-residue polypeptide: MKREHQESFGGGVISNNNKTNTNHLNSSKNINFGECSSMQNTNTKQNMWREEKETNGGGMDELLAALGYKVRSSDMADVAQKLEQLEMVMGSAQEEGINHLSSDTVHYDPTDLYSWVQTMLTELNPDSSQINDPLASLGSSSEILNNTFNDDSEYDLSAIPGMAAYPPQEENTAAKRMKTWSEPESEPAVVMSPPPAVENTRPVVLVDTQETGVRLVHTLMACAEAIQQKNLKLAEALVKHISLLASLQTGAMRKVASYFAQALARRIYGNPEETIDSSFSEILHMHFYESSPYLKFAHFTANQAILEAFAGAGRVHVIDFGLKQGMQWPALMQALALRPGGPPTFRLTGIGPPQADNTDALQQVGWKLAQLAQTIGVQFEFRGFVCNSIADLDPNMLEIRPGEAVAVNSVFELHTMLARPGSVEKVLNTVKKINPKIVTIVEQEANHNGPVFVDRFTEALHYYSSLFDSLEGSNSSSNNSNSNSTGLGSPSQDLLMSEIYLGKQICNVVAYEGVDRVERHETLTQWRSRMGSAGFEPVHLGSNAFKQASTLLALFAGGDGYRVEENNGCLMLGWHTRSLIATSAWKLPQNESK.

Positions 1-36 (MKREHQESFGGGVISNNNKTNTNHLNSSKNINFGEC) are disordered. Low complexity predominate over residues 15–30 (SNNNKTNTNHLNSSKN). The DELLA motif signature appears at 61 to 65 (DELLA). The GRAS domain maps to 207–587 (VDTQETGVRL…RSLIATSAWK (381 aa)). The tract at residues 214-268 (VRLVHTLMACAEAIQQKNLKLAEALVKHISLLASLQTGAMRKVASYFAQALARRI) is leucine repeat I (LRI). Residues 216-253 (LVHTLMACAEAIQQKNLKLAEALVKHISLLASLQTGAM) form a required for possible homodimerization region. A LxCxE motif; degenerate motif is present at residues 221-225 (MACAE). A VHIID region spans residues 285-350 (HMHFYESSPY…GGPPTFRLTG (66 aa)). A VHIID motif is present at residues 316-320 (VHVID). The tract at residues 364-396 (QVGWKLAQLAQTIGVQFEFRGFVCNSIADLDPN) is leucine repeat II (LRII). A PFYRE region spans residues 406-508 (VAVNSVFELH…EIYLGKQICN (103 aa)). Positions 414 to 418 (LHTML) match the LXXLL motif; degenerate motif. Positions 511 to 587 (AYEGVDRVER…RSLIATSAWK (77 aa)) are SAW.

It belongs to the GRAS family. DELLA subfamily. As to quaternary structure, may be a homodimer. Post-translationally, ubiquitinated. Upon GA application it is ubiquitinated, leading to its subsequent degradation. In terms of tissue distribution, strongly expressed in the vascular tissue and endodermis but barely in the inner cortical cells where arbuscule are formed during arbuscular mycorrhizal (AM) symbiosis.

It localises to the nucleus. In terms of biological role, probable transcriptional regulator that acts as a repressor of the gibberellin (GA) signaling pathway. Probably acts by participating in large multiprotein complexes that repress transcription of GA-inducible genes. Upon GA application, it is degraded by the proteasome, allowing the GA signaling pathway. Together with DELLA2, required to enable arbuscule development during arbuscular mycorrhizal (AM) symbiosis with AM fungi (e.g. Glomus versiforme) via the regulation of RAM1 which, in turn, regulates various AM genes (e.g. NSP1, NSP2, PT4, LEC5, RAM2, EXO70I, STR and RAD1). This is DELLA protein 1 from Medicago truncatula (Barrel medic).